A 386-amino-acid chain; its full sequence is Succinate--CoA ligase [ADP-forming] subunit beta (386 aa).

The 236-residue stretch at 9–244 (KAVLRSYGVS…LDEEDSKEIE (236 aa)) folds into the ATP-grasp domain. ATP is bound by residues Lys-46, 53–55 (GRG), Glu-99, Cys-102, and Glu-107. Residues Asn-199 and Asp-213 each contribute to the Mg(2+) site. Residues Asn-264 and 321–323 (GIM) each bind substrate.

Belongs to the succinate/malate CoA ligase beta subunit family. Heterotetramer of two alpha and two beta subunits. Mg(2+) is required as a cofactor.

It carries out the reaction succinate + ATP + CoA = succinyl-CoA + ADP + phosphate. The catalysed reaction is GTP + succinate + CoA = succinyl-CoA + GDP + phosphate. It functions in the pathway carbohydrate metabolism; tricarboxylic acid cycle; succinate from succinyl-CoA (ligase route): step 1/1. In terms of biological role, succinyl-CoA synthetase functions in the citric acid cycle (TCA), coupling the hydrolysis of succinyl-CoA to the synthesis of either ATP or GTP and thus represents the only step of substrate-level phosphorylation in the TCA. The beta subunit provides nucleotide specificity of the enzyme and binds the substrate succinate, while the binding sites for coenzyme A and phosphate are found in the alpha subunit. The polypeptide is Succinate--CoA ligase [ADP-forming] subunit beta (Bacillus cereus (strain G9842)).